We begin with the raw amino-acid sequence, 183 residues long: Capsid protein (183 aa).

The disordered stretch occupies residues 136-183 (NAPILSTLPETTVVRRRGRSPRRRTPSPRRRRSQSPRRRRSQSRESQC). Over residues 149 to 176 (VRRRGRSPRRRTPSPRRRRSQSPRRRRS) the composition is skewed to basic residues. 3 positions are modified to phosphoserine; by host: serine 155, serine 162, and serine 170. The 1; half-length repeat unit spans residues 155–161 (SPRRRTP). The interval 155–177 (SPRRRTPSPRRRRSQSPRRRRSQ) is 3 X 8 AA repeats of S-P-R-R-R-[PR]-S-Q. Residues 158–175 (RRTPSPRRRRSQSPRRRR) carry the Bipartite nuclear localization signal motif. 2 repeat units span residues 162-169 (SPRRRRSQ) and 170-177 (SPRRRRSQ). The tract at residues 177 to 183 (QSRESQC) is RNA binding.

This sequence belongs to the orthohepadnavirus core antigen family. As to quaternary structure, homodimerizes, then multimerizes. Interacts with cytosol exposed regions of viral L glycoprotein present in the reticulum-to-Golgi compartment. Interacts with human FLNB. Phosphorylated form interacts with host importin alpha; this interaction depends on the exposure of the NLS, which itself depends upon genome maturation and/or phosphorylation of the capsid protein. Interacts with host NUP153. Post-translationally, phosphorylated by host SRPK1, SRPK2, and maybe protein kinase C or GAPDH. Phosphorylation is critical for pregenomic RNA packaging. Protein kinase C phosphorylation is stimulated by HBx protein and may play a role in transport of the viral genome to the nucleus at the late step during the viral replication cycle.

It is found in the virion. Its subcellular location is the host cytoplasm. Functionally, self assembles to form an icosahedral capsid. Most capsids appear to be large particles with an icosahedral symmetry of T=4 and consist of 240 copies of capsid protein, though a fraction forms smaller T=3 particles consisting of 180 capsid proteins. Entering capsids are transported along microtubules to the nucleus. Phosphorylation of the capsid is thought to induce exposure of nuclear localization signal in the C-terminal portion of the capsid protein that allows binding to the nuclear pore complex via the importin (karyopherin-) alpha and beta. Capsids are imported in intact form through the nuclear pore into the nuclear basket, where it probably binds NUP153. Only capsids that contain the mature viral genome can release the viral DNA and capsid protein into the nucleoplasm. Immature capsids get stuck in the basket. Capsids encapsulate the pre-genomic RNA and the P protein. Pre-genomic RNA is reverse-transcribed into DNA while the capsid is still in the cytoplasm. The capsid can then either be directed to the nucleus, providing more genomes for transcription, or bud through the endoplasmic reticulum to provide new virions. The protein is Capsid protein of Hepatitis B virus genotype D subtype ayw (isolate Italy/CI/1992) (HBV-D).